Here is a 122-residue protein sequence, read N- to C-terminus: Small ribosomal subunit protein uS13 (122 aa).

A disordered region spans residues 99–122 (RGQRTHTNARTRKGPAKAIAGKKK).

The protein belongs to the universal ribosomal protein uS13 family. Part of the 30S ribosomal subunit. Forms a loose heterodimer with protein S19. Forms two bridges to the 50S subunit in the 70S ribosome.

In terms of biological role, located at the top of the head of the 30S subunit, it contacts several helices of the 16S rRNA. In the 70S ribosome it contacts the 23S rRNA (bridge B1a) and protein L5 of the 50S subunit (bridge B1b), connecting the 2 subunits; these bridges are implicated in subunit movement. Contacts the tRNAs in the A and P-sites. This is Small ribosomal subunit protein uS13 from Sinorhizobium medicae (strain WSM419) (Ensifer medicae).